The chain runs to 2293 residues: Protein Ycf2 (2293 aa).

Gly1647–Ser1654 lines the ATP pocket.

Belongs to the Ycf2 family.

It localises to the plastid. It is found in the chloroplast stroma. In terms of biological role, probable ATPase of unknown function. Its presence in a non-photosynthetic plant (Epifagus virginiana) and experiments in tobacco indicate that it has an essential function which is probably not related to photosynthesis. In Lobularia maritima (Sweet alyssum), this protein is Protein Ycf2.